Here is a 435-residue protein sequence, read N- to C-terminus: Uracil permease (435 aa).

Transmembrane regions (helical) follow at residues 17 to 37, 42 to 62, 67 to 87, 91 to 111, 122 to 142, 161 to 181, 191 to 213, 234 to 254, 311 to 331, 336 to 356, 376 to 396, and 399 to 419; these read FSWV…TILV, GMSP…YLLI, IPAY…VKAT, GAAM…ALLI, ILPP…LAST, LKHF…AIFL, LIGI…QPVL, VTLG…SEHI, VFSV…GFIG, LISS…FGII, NLII…IQVS, and GFQV…NLIL.

Belongs to the nucleobase:cation symporter-2 (NCS2) (TC 2.A.40) family.

The protein localises to the cell membrane. In terms of biological role, transport of uracil in the cell. In Bacillus subtilis (strain 168), this protein is Uracil permease (pyrP).